The sequence spans 156 residues: Protein eva-1 homolog A (156 aa).

A helical membrane pass occupies residues Ala-40–Met-60. The segment at Asp-79 to Ser-100 is disordered. Residues Asp-84 to Ala-96 are compositionally biased toward acidic residues. Thr-110 carries the phosphothreonine modification. At Ser-118 the chain carries Phosphoserine.

Belongs to the EVA1 family.

It localises to the endoplasmic reticulum membrane. It is found in the lysosome membrane. Acts as a regulator of programmed cell death, mediating both autophagy and apoptosis. This chain is Protein eva-1 homolog A (Eva1a), found in Mus musculus (Mouse).